Reading from the N-terminus, the 295-residue chain is CBY1-interacting BAR domain-containing protein 1 (295 aa).

Residues Met-1–Lys-49 constitute a mitochondrion transit peptide. Positions Asp-12–Val-222 are BAR-like. Positions Lys-111 to Val-185 form a coiled coil. Polar residues predominate over residues Ser-243–Ser-265. The tract at residues Ser-243–His-295 is disordered. Positions Asp-273–His-295 are enriched in acidic residues.

The protein belongs to the CIBAR family.

The protein localises to the cytoplasm. It is found in the cytoskeleton. Its subcellular location is the microtubule organizing center. The protein resides in the centrosome. It localises to the centriole. The protein localises to the cell projection. It is found in the cilium. Its subcellular location is the nucleus. The protein resides in the mitochondrion inner membrane. It localises to the flagellum. Functionally, plays a critical role in regulating mitochondrial ultrastructure and function by maintaining the integrity of mitochondrial morphology, particularly the organization of cristae. Plays a crucial role in ciliogenesis. Plays a key role in the correct positioning of the annulus, a septin-based ring structure in the sperm flagellum, serving both as a physical barrier and a membrane diffusion barrier that separates the midpiece (MP) from the principal piece (PP). The sequence is that of CBY1-interacting BAR domain-containing protein 1 (cibar1) from Danio rerio (Zebrafish).